The primary structure comprises 201 residues: Troponin I (201 aa).

The residue at position 1 (Ala1) is an N-acetylalanine. Basic and acidic residues predominate over residues 1–33 (ADKAKAAEEAKKKQDDIDRKKAEVRKRLEEQSL). The interval 1–45 (ADKAKAAEEAKKKQDDIDRKKAEVRKRLEEQSLKKQKKGFMTPER) is disordered. Positions 108-117 (IESDKYDVEL) are troponin T-interaction. An actin-binding region spans residues 135–148 (DLRGKFIKPTLKKV). Residues Lys142 and Lys146 each carry the N6,N6,N6-trimethyllysine modification. The segment at 182-201 (EDDKGATEGDGPAAEEVAAE) is disordered.

Belongs to the troponin I family.

Troponin I is the actomyosin ATPase inhibitory subunit present in the thin filament regulatory complex. The polypeptide is Troponin I (Astacus leptodactylus (Turkish narrow-clawed crayfish)).